Here is a 325-residue protein sequence, read N- to C-terminus: Heat-inducible transcription repressor HrcA (325 aa).

It belongs to the HrcA family.

In terms of biological role, negative regulator of class I heat shock genes (grpE-dnaK-dnaJ and groELS operons). Prevents heat-shock induction of these operons. The chain is Heat-inducible transcription repressor HrcA from Staphylococcus haemolyticus (strain JCSC1435).